A 42-amino-acid chain; its full sequence is Ostricacin-4 (42 aa).

Intrachain disulfides connect Cys-8–Cys-36, Cys-15–Cys-30, and Cys-20–Cys-37.

It is found in the secreted. Has antibacterial activity against the Gram-positive bacterium S.aureus 1056 MRSA (MIC=11.48 ug/ml) and the Gram-negative bacterium E.coli O157:H7 (MIC=12.03 ug/ml). Does not have antifungal activity against the yeast C.albicans 3153A. The chain is Ostricacin-4 from Struthio camelus (Common ostrich).